The following is a 186-amino-acid chain: Dual-action ribosomal maturation protein DarP (186 aa).

It belongs to the DarP family.

The protein localises to the cytoplasm. In terms of biological role, member of a network of 50S ribosomal subunit biogenesis factors which assembles along the 30S-50S interface, preventing incorrect 23S rRNA structures from forming. Promotes peptidyl transferase center (PTC) maturation. The polypeptide is Dual-action ribosomal maturation protein DarP (Proteus mirabilis (strain HI4320)).